A 523-amino-acid chain; its full sequence is 2,3-bisphosphoglycerate-independent phosphoglycerate mutase (523 aa).

Mn(2+) contacts are provided by Asp-13 and Ser-63. Residue Ser-63 is the Phosphoserine intermediate of the active site. Substrate contacts are provided by residues His-124, 156 to 157 (RD), Arg-188, Arg-194, 268 to 271 (RSDR), and Lys-341. Residues Asp-408, His-412, Asp-449, His-450, and His-467 each contribute to the Mn(2+) site.

The protein belongs to the BPG-independent phosphoglycerate mutase family. In terms of assembly, monomer. The cofactor is Mn(2+).

The enzyme catalyses (2R)-2-phosphoglycerate = (2R)-3-phosphoglycerate. It functions in the pathway carbohydrate degradation; glycolysis; pyruvate from D-glyceraldehyde 3-phosphate: step 3/5. Its function is as follows. Catalyzes the interconversion of 2-phosphoglycerate and 3-phosphoglycerate. The polypeptide is 2,3-bisphosphoglycerate-independent phosphoglycerate mutase (Salinibacter ruber (strain DSM 13855 / M31)).